Here is a 704-residue protein sequence, read N- to C-terminus: Translational regulator orb2 (704 aa).

The segment at 1–64 (MDSLKLPKAN…PPGLGSSTPI (64 aa)) is disordered. A gln/His-rich region spans residues 1–87 (MDSLKLPKAN…ILQSFHHSKH (87 aa)). A compositionally biased stretch (low complexity) spans 9-42 (ANSATSSASGSNSNLSGSTSASASAATSPTSSGT). Phosphoserine is present on residues serine 74, serine 88, and serine 100. 3 disordered regions span residues 82-106 (FHHSKHSPSGGASGGGDASPTSNLL), 166-266 (LPNL…GVSP), and 417-438 (SPSRLSPHSPHSPIQGGNGGNV). The tract at residues 163 to 240 (CGGLPNLNLN…PSSPGGGGGG (78 aa)) is gln/His-rich. 3 stretches are compositionally biased toward low complexity: residues 176 to 205 (QLHQQQHQQQHQQHQQHQQQQQLHQHQQQL), 218 to 233 (QQQQLRESGGSHSPSS), and 417 to 429 (SPSRLSPHSPHSP). Residues serine 425 and serine 428 each carry the phosphoserine modification. RRM domains are found at residues 447-538 (RKVF…PWRL) and 555-637 (KTVF…PYVL).

As to quaternary structure, monomer. Upon neuronal stimulation, forms stable amyloid-like oligomers composed of isoform A and isoform B which are required for formation of persistent long-term memory. Isoform A is critical for oligomer formation. Phe-5 of isoform A is required for amyloid-like oligomerization. Rapidly forms amyloids and toxic intermediates are extremely transient. Unlike in the adult nervous system, remains monomeric in the early embryo. Interacts with the translational regulator bol. Interacts with Tob; the interaction is enhanced by neuronal stimulation, stabilizes isoform A and induces oligomerization. Post-translationally, phosphorylation regulates interaction with Tob and oligomerization. Protein phosphatase 2A keeps both Orb2 and Tob in an unphosphorylated form. Following synaptic activation, unphosphorylated Orb2 is bound and stabilized by unphosphorylated Tob. Tob recruits activated LimK which phosphorylates both Orb2 and Tob and enhances Orb2 oligomerization. As to expression, broadly expressed throughout the nervous system of embryo, larva and adult including the ventral nerve cord and brain (at protein level). In early embryos, deposited maternally and distributed uniformly throughout the embryo until the extended germband stage. By mid-embryogenesis, highest levels are found in the central and peripheral nervous systems with lower expression also detected in the ectoderm and mesoderm. In adults, high levels are present in the head and body of both sexes with higher expression in testis than ovary. In the ovary, expressed in both germ and follicle cells. In adult head, predominantly neuronal with broad expression throughout the brain and ventral ganglia including the mushroom body.

The protein resides in the perikaryon. The protein localises to the cell projection. It localises to the axon. It is found in the dendrite. Its subcellular location is the synapse. The protein resides in the cytoplasm. The protein localises to the perinuclear region. In terms of biological role, RNA-binding protein involved in translational regulation and required for long-term memory. Required in mushroom body gamma neurons for long-term memory in male courtship. Binds to mRNA 3'-UTRs. In its monomeric form, acts as a translational repressor of genes involved in neuronal growth, synapse formation and protein turnover. In its amyloid-like oligomeric form, acts as a translational activator. The monomeric form reduces poly(A) tail length and destabilizes mRNA while the oligomeric form protects and elongates the poly(A) tail and stabilizes mRNA. Involved in asymmetric cell division in the central nervous system. Plays a role in synapse formation and morphology at neuromuscular junctions by modulating the translation of the tumor suppressor brat. Required for the progression of spermatogenesis through meiosis and for sperm differentiation. During sperm differentiation, required to asymmetrically localize and activate the translation of protein kinase aPKC mRNAs which is necessary for spermatid cyst polarization. Also required during spermatid cyst polarization for localization and translation of its own mRNA. Functionally, required for initial memory acquisition. Following subsequent late dopaminergic pathway activation, recruits isoform B into a complex to activate translation of CaMKII which is required for long-term memory consolidation. The chain is Translational regulator orb2 from Drosophila melanogaster (Fruit fly).